We begin with the raw amino-acid sequence, 240 residues long: UDP-2,3-diacylglucosamine hydrolase (240 aa).

Mn(2+) is bound by residues Asp-8, His-10, Asp-41, Asn-79, and His-114. 79–80 contributes to the substrate binding site; sequence NR. Substrate-binding residues include Asp-122, Ser-160, Asn-164, Lys-167, and His-195. The Mn(2+) site is built by His-195 and His-197.

It belongs to the LpxH family. Mn(2+) is required as a cofactor.

It localises to the cell inner membrane. The protein resides in the cytoplasm. It carries out the reaction UDP-2-N,3-O-bis[(3R)-3-hydroxytetradecanoyl]-alpha-D-glucosamine + H2O = 2-N,3-O-bis[(3R)-3-hydroxytetradecanoyl]-alpha-D-glucosaminyl 1-phosphate + UMP + 2 H(+). It participates in glycolipid biosynthesis; lipid IV(A) biosynthesis; lipid IV(A) from (3R)-3-hydroxytetradecanoyl-[acyl-carrier-protein] and UDP-N-acetyl-alpha-D-glucosamine: step 4/6. Its activity is regulated as follows. Inhibited by a sulfonyl piperazine compound that shows antibacterial activity against E.coli; LpxH is the cellular target of this compound. Inhibited by 0.01% (or more) Triton X-100 in vitro. Its function is as follows. Hydrolyzes the pyrophosphate bond of UDP-2,3-diacylglucosamine to yield 2,3-diacylglucosamine 1-phosphate (lipid X) and UMP by catalyzing the attack of water at the alpha-P atom. Involved in the biosynthesis of lipid A, a phosphorylated glycolipid that anchors the lipopolysaccharide to the outer membrane of the cell. Is essential for E.coli growth. Does not cleave the unacylated UDP-GlcNAc, the mono-acylated UDP-3-O-(R)-3-hydroxymyristoyl-GlcNAc, and CDP-diacylglycerol. The polypeptide is UDP-2,3-diacylglucosamine hydrolase (Escherichia coli (strain K12)).